Consider the following 476-residue polypeptide: Adenosylhomocysteinase (476 aa).

Residues threonine 67, aspartate 142, and glutamate 202 each contribute to the substrate site. An NAD(+)-binding site is contributed by 203-205 (TTT). The substrate site is built by lysine 232 and aspartate 236. NAD(+) is bound by residues asparagine 237, 266-271 (GYGDVG), glutamate 289, asparagine 324, 345-347 (IGH), and asparagine 390.

The protein belongs to the adenosylhomocysteinase family. It depends on NAD(+) as a cofactor.

It is found in the cytoplasm. It catalyses the reaction S-adenosyl-L-homocysteine + H2O = L-homocysteine + adenosine. Its pathway is amino-acid biosynthesis; L-homocysteine biosynthesis; L-homocysteine from S-adenosyl-L-homocysteine: step 1/1. Its function is as follows. May play a key role in the regulation of the intracellular concentration of adenosylhomocysteine. The protein is Adenosylhomocysteinase of Synechococcus sp. (strain CC9605).